A 417-amino-acid polypeptide reads, in one-letter code: Magnesium-protoporphyrin IX monomethyl ester [oxidative] cyclase, chloroplastic (417 aa).

A chloroplast-targeting transit peptide spans 1 to 45; sequence MASAMELSLLNPAMHHYGIAAKTASHLPVVPARRASSGAVRFRVR.

The protein belongs to the AcsF family. It depends on Fe cation as a cofactor.

It localises to the plastid. The protein resides in the chloroplast membrane. It carries out the reaction Mg-protoporphyrin IX 13-monomethyl ester + 3 NADPH + 3 O2 + 2 H(+) = 3,8-divinyl protochlorophyllide a + 3 NADP(+) + 5 H2O. Its pathway is porphyrin-containing compound metabolism; chlorophyll biosynthesis. In terms of biological role, catalyzes the formation of the isocyclic ring in chlorophyll biosynthesis. Mediates the cyclase reaction, which results in the formation of divinylprotochlorophyllide (Pchlide) characteristic of all chlorophylls from magnesium-protoporphyrin IX 13-monomethyl ester (MgPMME). The sequence is that of Magnesium-protoporphyrin IX monomethyl ester [oxidative] cyclase, chloroplastic (CRD1) from Hordeum vulgare (Barley).